The following is a 948-amino-acid chain: Bifunctional glutamine synthetase adenylyltransferase/adenylyl-removing enzyme (948 aa).

Residues 1–445 (MAPPPDTSGS…IFTEVIAEPP (445 aa)) form an adenylyl removase region. Residues 451–948 (EPLLDGGEAE…WKQIIEAPVF (498 aa)) are adenylyl transferase.

It belongs to the GlnE family. It depends on Mg(2+) as a cofactor.

It catalyses the reaction [glutamine synthetase]-O(4)-(5'-adenylyl)-L-tyrosine + phosphate = [glutamine synthetase]-L-tyrosine + ADP. It carries out the reaction [glutamine synthetase]-L-tyrosine + ATP = [glutamine synthetase]-O(4)-(5'-adenylyl)-L-tyrosine + diphosphate. Its function is as follows. Involved in the regulation of glutamine synthetase GlnA, a key enzyme in the process to assimilate ammonia. When cellular nitrogen levels are high, the C-terminal adenylyl transferase (AT) inactivates GlnA by covalent transfer of an adenylyl group from ATP to specific tyrosine residue of GlnA, thus reducing its activity. Conversely, when nitrogen levels are low, the N-terminal adenylyl removase (AR) activates GlnA by removing the adenylyl group by phosphorolysis, increasing its activity. The regulatory region of GlnE binds the signal transduction protein PII (GlnB) which indicates the nitrogen status of the cell. In Methylococcus capsulatus (strain ATCC 33009 / NCIMB 11132 / Bath), this protein is Bifunctional glutamine synthetase adenylyltransferase/adenylyl-removing enzyme.